Consider the following 107-residue polypeptide: Putative ATP synthase subunit f, mitochondrial (107 aa).

Belongs to the ATPase F chain family. As to quaternary structure, F-type ATPases have 2 components, CF(1) - the catalytic core - and CF(0) - the membrane proton channel. CF(0) seems to have nine subunits: a, b, c, d, e, f, g, F6 and 8 (or A6L).

It localises to the mitochondrion membrane. In terms of biological role, mitochondrial membrane ATP synthase (F(1)F(0) ATP synthase or Complex V) produces ATP from ADP in the presence of a proton gradient across the membrane which is generated by electron transport complexes of the respiratory chain. F-type ATPases consist of two structural domains, F(1) - containing the extramembraneous catalytic core and F(0) - containing the membrane proton channel, linked together by a central stalk and a peripheral stalk. During catalysis, ATP synthesis in the catalytic domain of F(1) is coupled via a rotary mechanism of the central stalk subunits to proton translocation. Part of the complex F(0) domain. Minor subunit located with subunit a in the membrane. In Drosophila melanogaster (Fruit fly), this protein is Putative ATP synthase subunit f, mitochondrial.